A 265-amino-acid chain; its full sequence is Insulin-like growth factor-binding protein 2-B (265 aa).

A signal peptide spans 1 to 17; that stretch reads MSLALLCSLLLVHGSLG. In terms of domain architecture, IGFBP N-terminal spans 19-99; that stretch reads IVFRCPSCTA…IQGLGRCENK (81 aa). Disulfide bonds link C23–C49, C26–C51, C34–C52, C41–C55, C63–C76, and C70–C96. The span at 107–122 shows a compositional bias: polar residues; it reads TNQESAAHSGEVNGTR. 2 disordered regions span residues 107–128 and 144–170; these read TNQE…PMKK and HHNN…SQCQ. The Thyroglobulin type-1 domain maps to 166–248; that stretch reads QSQCQQELDK…SDKVRGDPNC (83 aa). Cystine bridges form between C169–C203, C214–C225, and C227–C248. Residues 238–265 are disordered; it reads SSDKVRGDPNCSQYYGGPELEPPTAQQK. Positions 243 to 245 match the Cell attachment site motif; sequence RGD.

Interacts with igf2. Interacts with igf1. In early embryos, expressed at a low level in most tissues with expression becoming abundant in the liver by 96 hours post-fertilization (hpf). The expression pattern in adults exhibits sexual dimorphism; in adult males expression is limited exclusively to the liver whereas in adult females expression is observed in the liver and other tissues including the gut, kidney, ovary and muscle.

The protein resides in the secreted. IGF-binding proteins prolong the half-life of the IGFs and have been shown to either inhibit or stimulate the growth promoting effects of the IGFs on cell culture. They alter the interaction of IGFs with their cell surface receptors. The sequence is that of Insulin-like growth factor-binding protein 2-B from Danio rerio (Zebrafish).